Here is a 269-residue protein sequence, read N- to C-terminus: Shikimate dehydrogenase (NADP(+)) (269 aa).

Residues 22 to 24 and Thr68 each bind shikimate; that span reads TLS. The Proton acceptor role is filled by Lys72. Positions 93 and 104 each coordinate shikimate. NADP(+) is bound by residues 128–132, 152–157, and Phe210; these read GAGGA and NRTNLR. A shikimate-binding site is contributed by Tyr212. Gly233 lines the NADP(+) pocket.

The protein belongs to the shikimate dehydrogenase family. As to quaternary structure, homodimer.

It catalyses the reaction shikimate + NADP(+) = 3-dehydroshikimate + NADPH + H(+). Its pathway is metabolic intermediate biosynthesis; chorismate biosynthesis; chorismate from D-erythrose 4-phosphate and phosphoenolpyruvate: step 4/7. Functionally, involved in the biosynthesis of the chorismate, which leads to the biosynthesis of aromatic amino acids. Catalyzes the reversible NADPH linked reduction of 3-dehydroshikimate (DHSA) to yield shikimate (SA). The protein is Shikimate dehydrogenase (NADP(+)) of Saccharolobus islandicus (strain Y.N.15.51 / Yellowstone #2) (Sulfolobus islandicus).